Consider the following 74-residue polypeptide: MEKLTILLLVAAVLMWTQALIQEKRPKEKIKFLSKRKTTAESWWEGECSGWSVYCTQHSECCSGECTGNYCELF.

A signal peptide spans 1–19 (MEKLTILLLVAAVLMWTQA). A propeptide spanning residues 20–46 (LIQEKRPKEKIKFLSKRKTTAESWWEG) is cleaved from the precursor. 3 disulfides stabilise this stretch: cysteine 48-cysteine 62, cysteine 55-cysteine 66, and cysteine 61-cysteine 71.

It belongs to the conotoxin O2 superfamily. In terms of tissue distribution, expressed by the venom duct.

It is found in the secreted. The sequence is that of Conotoxin VnMEKL-0221 from Conus ventricosus (Mediterranean cone).